We begin with the raw amino-acid sequence, 364 residues long: Peptide chain release factor 2 (364 aa).

Position 251 is an N5-methylglutamine (glutamine 251).

It belongs to the prokaryotic/mitochondrial release factor family. In terms of processing, methylated by PrmC. Methylation increases the termination efficiency of RF2.

The protein resides in the cytoplasm. In terms of biological role, peptide chain release factor 2 directs the termination of translation in response to the peptide chain termination codons UGA and UAA. The polypeptide is Peptide chain release factor 2 (Campylobacter hominis (strain ATCC BAA-381 / DSM 21671 / CCUG 45161 / LMG 19568 / NCTC 13146 / CH001A)).